A 103-amino-acid polypeptide reads, in one-letter code: SLC35A4 upstream open reading frame protein (103 aa).

A helical transmembrane segment spans residues 62-84 (ASAVLGFAVGTCTGIYAAQAYAV).

Its subcellular location is the mitochondrion inner membrane. Required to maintain cellular respiration. This chain is SLC35A4 upstream open reading frame protein, found in Homo sapiens (Human).